Here is a 232-residue protein sequence, read N- to C-terminus: Ribose-5-phosphate isomerase A (232 aa).

Substrate is bound by residues 31–34, 88–91, and 101–104; these read TGST, DGAD, and KGGG. Glu-110 functions as the Proton acceptor in the catalytic mechanism. Residue Lys-128 coordinates substrate.

The protein belongs to the ribose 5-phosphate isomerase family. Homodimer.

The catalysed reaction is aldehydo-D-ribose 5-phosphate = D-ribulose 5-phosphate. It functions in the pathway carbohydrate degradation; pentose phosphate pathway; D-ribose 5-phosphate from D-ribulose 5-phosphate (non-oxidative stage): step 1/1. Functionally, catalyzes the reversible conversion of ribose-5-phosphate to ribulose 5-phosphate. In Lactobacillus gasseri (strain ATCC 33323 / DSM 20243 / BCRC 14619 / CIP 102991 / JCM 1131 / KCTC 3163 / NCIMB 11718 / NCTC 13722 / AM63), this protein is Ribose-5-phosphate isomerase A.